Consider the following 483-residue polypeptide: Glutamyl-tRNA(Gln) amidotransferase subunit A (483 aa).

Catalysis depends on charge relay system residues Lys75 and Ser150. Ser174 functions as the Acyl-ester intermediate in the catalytic mechanism.

It belongs to the amidase family. GatA subfamily. Heterotrimer of A, B and C subunits.

The catalysed reaction is L-glutamyl-tRNA(Gln) + L-glutamine + ATP + H2O = L-glutaminyl-tRNA(Gln) + L-glutamate + ADP + phosphate + H(+). Its function is as follows. Allows the formation of correctly charged Gln-tRNA(Gln) through the transamidation of misacylated Glu-tRNA(Gln) in organisms which lack glutaminyl-tRNA synthetase. The reaction takes place in the presence of glutamine and ATP through an activated gamma-phospho-Glu-tRNA(Gln). The polypeptide is Glutamyl-tRNA(Gln) amidotransferase subunit A (Legionella pneumophila (strain Corby)).